The following is a 122-amino-acid chain: uncharacterized protein (122 aa).

The protein resides in the mitochondrion. This is an uncharacterized protein from Arabidopsis thaliana (Mouse-ear cress).